We begin with the raw amino-acid sequence, 86 residues long: Small ribosomal subunit protein uS17 (86 aa).

This sequence belongs to the universal ribosomal protein uS17 family. Part of the 30S ribosomal subunit.

One of the primary rRNA binding proteins, it binds specifically to the 5'-end of 16S ribosomal RNA. In Rhizorhabdus wittichii (strain DSM 6014 / CCUG 31198 / JCM 15750 / NBRC 105917 / EY 4224 / RW1) (Sphingomonas wittichii), this protein is Small ribosomal subunit protein uS17.